Here is a 206-residue protein sequence, read N- to C-terminus: MAETTIGFRCQDFVLVAAAGLNAFYYIKITDTEDKITELDSHKVVACAGENGPRTHFVEYVKCNMALKKMREHGRMISTHATASFMRNTLAGALRSRDGLYPVNCLLAGFDVPASAEDDVATGAHLYYLDYLGTLQEVPYGCHGYGAPFVTAMLDRMWRPNLTAQEGVELMQKCCDEVNKRVVVSNNTFICKAVPKDGVERVQSVS.

The protein belongs to the peptidase T1B family. The 26S proteasome consists of a 20S proteasome core and two 19S regulatory subunits. The 20S proteasome core is composed of 28 subunits that are arranged in four stacked rings, resulting in a barrel-shaped structure. The two end rings are each formed by seven alpha subunits, and the two central rings are each formed by seven beta subunits. The catalytic chamber with the active sites is on the inside of the barrel.

The protein resides in the cytoplasm. The protein localises to the nucleus. In terms of biological role, non-catalytic component of the proteasome, a multicatalytic proteinase complex which is characterized by its ability to cleave peptides with Arg, Phe, Tyr, Leu, and Glu adjacent to the leaving group at neutral or slightly basic pH. The proteasome has an ATP-dependent proteolytic activity. This chain is Proteasome subunit beta type-2 (PSB4), found in Trypanosoma brucei brucei.